Here is a 323-residue protein sequence, read N- to C-terminus: Cytosolic sulfotransferase 5 (323 aa).

69-74 (KCGTTW) contacts 3'-phosphoadenylyl sulfate. Catalysis depends on His-135, which acts as the Proton acceptor. Residues Arg-157, Ser-165, and 289–291 (RKG) each bind 3'-phosphoadenylyl sulfate.

It belongs to the sulfotransferase 1 family. Expressed in inflorescence stems, roots and siliques.

The protein localises to the cytoplasm. In terms of biological role, sulfotransferase that utilizes 3'-phospho-5'-adenylyl sulfate (PAPS) as sulfonate donor to specifically catalyze the sulfate conjugation of flavones and flavonols. Strictly specific for the position 7. Substrate preference is kaempferol 3-sulfate &gt; isorhamnetin &gt; kaempferol. The polypeptide is Cytosolic sulfotransferase 5 (SOT5) (Arabidopsis thaliana (Mouse-ear cress)).